The following is a 572-amino-acid chain: Dihydroxy-acid dehydratase (572 aa).

Aspartate 78 serves as a coordination point for Mg(2+). Cysteine 119 provides a ligand contact to [2Fe-2S] cluster. Mg(2+) contacts are provided by aspartate 120 and lysine 121. Lysine 121 bears the N6-carboxylysine mark. A [2Fe-2S] cluster-binding site is contributed by cysteine 192. Glutamate 459 serves as a coordination point for Mg(2+). Serine 485 serves as the catalytic Proton acceptor.

This sequence belongs to the IlvD/Edd family. In terms of assembly, homodimer. The cofactor is [2Fe-2S] cluster. Mg(2+) is required as a cofactor.

It catalyses the reaction (2R)-2,3-dihydroxy-3-methylbutanoate = 3-methyl-2-oxobutanoate + H2O. The enzyme catalyses (2R,3R)-2,3-dihydroxy-3-methylpentanoate = (S)-3-methyl-2-oxopentanoate + H2O. Its pathway is amino-acid biosynthesis; L-isoleucine biosynthesis; L-isoleucine from 2-oxobutanoate: step 3/4. It participates in amino-acid biosynthesis; L-valine biosynthesis; L-valine from pyruvate: step 3/4. In terms of biological role, functions in the biosynthesis of branched-chain amino acids. Catalyzes the dehydration of (2R,3R)-2,3-dihydroxy-3-methylpentanoate (2,3-dihydroxy-3-methylvalerate) into 2-oxo-3-methylpentanoate (2-oxo-3-methylvalerate) and of (2R)-2,3-dihydroxy-3-methylbutanoate (2,3-dihydroxyisovalerate) into 2-oxo-3-methylbutanoate (2-oxoisovalerate), the penultimate precursor to L-isoleucine and L-valine, respectively. This is Dihydroxy-acid dehydratase from Helicobacter hepaticus (strain ATCC 51449 / 3B1).